The chain runs to 143 residues: Histone H2B (143 aa).

The interval 1–52 (MAPKPASTAGKAPASTASKAPVKSDAAKTASKSKVSSGADGEKKKRKKTRKE) is disordered. K11 is modified (N6-acetyllysine; alternate). Residue K11 forms a Glycyl lysine isopeptide (Lys-Gly) (interchain with G-Cter in SUMO); alternate linkage. Residue S15 is modified to Phosphoserine. Residue K19 is modified to N6-acetyllysine. The segment covering 23–39 (KSDAAKTASKSKVSSGA) has biased composition (low complexity). A Glycyl lysine isopeptide (Lys-Gly) (interchain with G-Cter in ubiquitin) cross-link involves residue K137.

Belongs to the histone H2B family. The nucleosome is a histone octamer containing two molecules each of H2A, H2B, H3 and H4 assembled in one H3-H4 heterotetramer and two H2A-H2B heterodimers. The octamer wraps approximately 147 bp of DNA. In terms of processing, monoubiquitinated to form H2BK123ub1. H2BK123ub1 gives a specific tag for epigenetic transcriptional activation and is also prerequisite for H3K4me and H3K79me formation. H2BK123ub1 also modulates the formation of double-strand breaks during meiosis and is a prerequisite for DNA-damage checkpoint activation. Phosphorylated to form H2BS10ph during progression through meiotic prophase. May be correlated with chromosome condensation. Post-translationally, acetylation of N-terminal lysines and particularly formation of H2BK11ac has a positive effect on transcription. In terms of processing, sumoylation to form H2BK6su occurs preferentially near the telomeres and represses gene transcription.

The protein localises to the nucleus. Its subcellular location is the chromosome. In terms of biological role, core component of nucleosome. Nucleosomes wrap and compact DNA into chromatin, limiting DNA accessibility to the cellular machineries which require DNA as a template. Histones thereby play a central role in transcription regulation, DNA repair, DNA replication and chromosomal stability. DNA accessibility is regulated via a complex set of post-translational modifications of histones, also called histone code, and nucleosome remodeling. In Agaricus bisporus (White button mushroom), this protein is Histone H2B (htbA).